We begin with the raw amino-acid sequence, 136 residues long: Ig heavy chain V region BCL1 (136 aa).

Residues 1 to 19 (MGWSCIIFFLVATATGVHS) form the signal peptide. The Ig-like domain maps to 20 to 135 (QVQLQQSGPE…WGQGTTLTVS (116 aa)).

The sequence is that of Ig heavy chain V region BCL1 from Mus musculus (Mouse).